The chain runs to 182 residues: Probable RNA 2'-phosphotransferase (182 aa).

This sequence belongs to the KptA/TPT1 family.

Removes the 2'-phosphate from RNA via an intermediate in which the phosphate is ADP-ribosylated by NAD followed by a presumed transesterification to release the RNA and generate ADP-ribose 1''-2''-cyclic phosphate (APPR&gt;P). May function as an ADP-ribosylase. This Acetivibrio thermocellus (strain ATCC 27405 / DSM 1237 / JCM 9322 / NBRC 103400 / NCIMB 10682 / NRRL B-4536 / VPI 7372) (Clostridium thermocellum) protein is Probable RNA 2'-phosphotransferase.